Reading from the N-terminus, the 461-residue chain is Cysteine--tRNA ligase (461 aa).

Cys28 lines the Zn(2+) pocket. A 'HIGH' region motif is present at residues 30–40 (ITVYDLCHIGH). Zn(2+)-binding residues include Cys209, His234, and Glu238. The short motif at 266-270 (KMSKS) is the 'KMSKS' region element. ATP is bound at residue Lys269.

Belongs to the class-I aminoacyl-tRNA synthetase family. Monomer. Zn(2+) serves as cofactor.

The protein resides in the cytoplasm. It carries out the reaction tRNA(Cys) + L-cysteine + ATP = L-cysteinyl-tRNA(Cys) + AMP + diphosphate. The sequence is that of Cysteine--tRNA ligase from Salmonella arizonae (strain ATCC BAA-731 / CDC346-86 / RSK2980).